Reading from the N-terminus, the 1142-residue chain is Protein lin-25 (1142 aa).

The span at 600–613 (IEEEIEEEEEDIEP) shows a compositional bias: acidic residues. Residues 600 to 706 (IEEEIEEEEE…EKPKEPLEPT (107 aa)) form a disordered region. Basic and acidic residues-rich tracts occupy residues 614–627 (EVVKEMKESGTEKE), 652–662 (DEQKTEEKMDT), and 679–703 (DPPKVEEPAERINQEKPEEKPKEPL).

Its subcellular location is the nucleus. It is found in the cytoplasm. In terms of biological role, participates in the inductive signaling pathway downstream of let-60 Ras and the RAF/MAP kinase cascade to regulate specification and differentiation of many cell types. Positively regulates the fate of vulval precursor cells. Required for induction of the P12 and excretory duct cell fates. In males, it is also required for proper formation of spicules. Does not function in the signaling pathway that promotes exit from pachytene. The sequence is that of Protein lin-25 from Caenorhabditis briggsae.